Here is a 173-residue protein sequence, read N- to C-terminus: Cytidylate kinase (173 aa).

7–15 contributes to the ATP binding site; that stretch reads GLAGTGTST.

The protein belongs to the cytidylate kinase family. Type 2 subfamily.

The protein localises to the cytoplasm. The enzyme catalyses CMP + ATP = CDP + ADP. The catalysed reaction is dCMP + ATP = dCDP + ADP. This is Cytidylate kinase from Methanosphaera stadtmanae (strain ATCC 43021 / DSM 3091 / JCM 11832 / MCB-3).